The following is a 344-amino-acid chain: 4-dimethylallyltryptophan N-methyltransferase easF (344 aa).

This sequence belongs to the methyltransferase superfamily. As to quaternary structure, homodimer.

The enzyme catalyses 4-(3-methylbut-2-enyl)-L-tryptophan + S-adenosyl-L-methionine = 4-(3-methylbut-2-enyl)-L-abrine + S-adenosyl-L-homocysteine + H(+). The protein operates within alkaloid biosynthesis; ergot alkaloid biosynthesis. Functionally, 4-dimethylallyltryptophan N-methyltransferase; part of the gene cluster that mediates the biosynthesis of fungal ergot alkaloid. DmaW catalyzes the first step of ergot alkaloid biosynthesis by condensing dimethylallyl diphosphate (DMAP) and tryptophan to form 4-dimethylallyl-L-tryptophan. The second step is catalyzed by the methyltransferase easF that methylates 4-dimethylallyl-L-tryptophan in the presence of S-adenosyl-L-methionine, resulting in the formation of 4-dimethylallyl-L-abrine. The catalase easC and the FAD-dependent oxidoreductase easE then transform 4-dimethylallyl-L-abrine to chanoclavine-I which is further oxidized by easD in the presence of NAD(+), resulting in the formation of chanoclavine-I aldehyde. Agroclavine dehydrogenase easG then mediates the conversion of chanoclavine-I aldehyde to agroclavine via a non-enzymatic adduct reaction: the substrate is an iminium intermediate that is formed spontaneously from chanoclavine-I aldehyde in the presence of glutathione. The presence of easA is not required to complete this reaction. Further conversion of agroclavine to paspalic acid is a two-step process involving oxidation of agroclavine to elymoclavine and of elymoclavine to paspalic acid, the second step being performed by the elymoclavine oxidase cloA. Paspalic acid is then further converted to D-lysergic acid. Ergopeptines are assembled from D-lysergic acid and three different amino acids by the D-lysergyl-peptide-synthetases composed each of a monomudular and a trimodular nonribosomal peptide synthetase subunit. LpsB and lpsC encode the monomodular subunits responsible for D-lysergic acid activation and incorporation into the ergopeptine backbone. LpsA1 and A2 subunits encode the trimodular nonribosomal peptide synthetase assembling the tripeptide portion of ergopeptines. LpsA1 is responsible for formation of the major ergopeptine, ergotamine, and lpsA2 for alpha-ergocryptine, the minor ergopeptine of the total alkaloid mixture elaborated by C.purpurea. D-lysergyl-tripeptides are assembled by the nonribosomal peptide synthetases and released as N-(D-lysergyl-aminoacyl)-lactams. Cyclolization of the D-lysergyl-tripeptides is performed by the Fe(2+)/2-ketoglutarate-dependent dioxygenase easH which introduces a hydroxyl group into N-(D-lysergyl-aminoacyl)-lactam at alpha-C of the aminoacyl residue followed by spontaneous condensation with the terminal lactam carbonyl group. The polypeptide is 4-dimethylallyltryptophan N-methyltransferase easF (Claviceps purpurea (Ergot fungus)).